A 688-amino-acid polypeptide reads, in one-letter code: DNA ligase (688 aa).

NAD(+)-binding positions include 38 to 42 (DEEYD), 87 to 88 (SL), and E118. Residue K120 is the N6-AMP-lysine intermediate of the active site. NAD(+) contacts are provided by R141, E175, K291, and K315. Residues C409, C412, C428, and C433 each coordinate Zn(2+). The BRCT domain occupies 590–679 (VKLDILRGLT…AELKGYNFDE (90 aa)).

The protein belongs to the NAD-dependent DNA ligase family. LigA subfamily. It depends on Mg(2+) as a cofactor. The cofactor is Mn(2+).

It carries out the reaction NAD(+) + (deoxyribonucleotide)n-3'-hydroxyl + 5'-phospho-(deoxyribonucleotide)m = (deoxyribonucleotide)n+m + AMP + beta-nicotinamide D-nucleotide.. Functionally, DNA ligase that catalyzes the formation of phosphodiester linkages between 5'-phosphoryl and 3'-hydroxyl groups in double-stranded DNA using NAD as a coenzyme and as the energy source for the reaction. It is essential for DNA replication and repair of damaged DNA. This is DNA ligase from Thermotoga maritima (strain ATCC 43589 / DSM 3109 / JCM 10099 / NBRC 100826 / MSB8).